Here is a 261-residue protein sequence, read N- to C-terminus: Indole-3-glycerol phosphate synthase (261 aa).

The protein belongs to the TrpC family.

It catalyses the reaction 1-(2-carboxyphenylamino)-1-deoxy-D-ribulose 5-phosphate + H(+) = (1S,2R)-1-C-(indol-3-yl)glycerol 3-phosphate + CO2 + H2O. Its pathway is amino-acid biosynthesis; L-tryptophan biosynthesis; L-tryptophan from chorismate: step 4/5. The sequence is that of Indole-3-glycerol phosphate synthase from Burkholderia pseudomallei (strain 1710b).